We begin with the raw amino-acid sequence, 337 residues long: tRNA N6-adenosine threonylcarbamoyltransferase (337 aa).

Residues histidine 111 and histidine 115 each coordinate Fe cation. Substrate is bound by residues 134–138, aspartate 167, glycine 180, and asparagine 272; that span reads LVSGG. Aspartate 300 provides a ligand contact to Fe cation.

The protein belongs to the KAE1 / TsaD family. Fe(2+) serves as cofactor.

Its subcellular location is the cytoplasm. The catalysed reaction is L-threonylcarbamoyladenylate + adenosine(37) in tRNA = N(6)-L-threonylcarbamoyladenosine(37) in tRNA + AMP + H(+). In terms of biological role, required for the formation of a threonylcarbamoyl group on adenosine at position 37 (t(6)A37) in tRNAs that read codons beginning with adenine. Is involved in the transfer of the threonylcarbamoyl moiety of threonylcarbamoyl-AMP (TC-AMP) to the N6 group of A37, together with TsaE and TsaB. TsaD likely plays a direct catalytic role in this reaction. This Nitrosomonas europaea (strain ATCC 19718 / CIP 103999 / KCTC 2705 / NBRC 14298) protein is tRNA N6-adenosine threonylcarbamoyltransferase.